Here is a 256-residue protein sequence, read N- to C-terminus: Small ribosomal subunit protein eS1 (256 aa).

Positions 1-18 (MAVGKNKRLSKGKKGLKK) are enriched in basic residues. The tract at residues 1–20 (MAVGKNKRLSKGKKGLKKKA) is disordered. A2 is subject to N-acetylalanine; partial.

This sequence belongs to the eukaryotic ribosomal protein eS1 family. Component of the small ribosomal subunit. Mature ribosomes consist of a small (40S) and a large (60S) subunit. The 40S subunit contains about 33 different proteins and 1 molecule of RNA (18S). The 60S subunit contains about 49 different proteins and 3 molecules of RNA (25S, 5.8S and 5S).

The protein localises to the cytoplasm. The chain is Small ribosomal subunit protein eS1 from Podospora anserina (strain S / ATCC MYA-4624 / DSM 980 / FGSC 10383) (Pleurage anserina).